Here is a 299-residue protein sequence, read N- to C-terminus: Coenzyme PQQ synthesis protein B (299 aa).

This sequence belongs to the PqqB family.

It functions in the pathway cofactor biosynthesis; pyrroloquinoline quinone biosynthesis. Its function is as follows. May be involved in the transport of PQQ or its precursor to the periplasm. This Xanthomonas axonopodis pv. citri (strain 306) protein is Coenzyme PQQ synthesis protein B.